Here is a 389-residue protein sequence, read N- to C-terminus: MTTSVSLLGASGSVGESTLRVLRAYPQEFRLHSFSVHSNLEKAREIQKEFSPEFLCVSDSTADRTVLGNKIGKTQVLYGESALCELVREPEVQIVITAIVGSVGLRPTIAAITSGKRLGIANKETLVTFGPLVNSLIAKHKTKVVPVDSEHNALFQLLESLNRDSVEKIVLTASGGSFRDLSVEQLAYVTKEQALHHPTWNMGPKITVDSNGMINKGLEVIEAHFLFGVPYERIGVVIHPQSIAHGIVELKDGASFVYASYPDMIFPIAHSLFHPEPVPKSLRSYSAKDWGKLEFWEPDLKRYPGLGLAFEAGKAGGTAPCIFNAANEAAVELFLKDEIRFTEIPDYIWYTLDEMPIDFPTSLEEYEEVDRIARKTVLNLKARKVVSAC.

Residues serine 11, glycine 12, serine 13, valine 14, asparagine 39, and asparagine 122 each contribute to the NADPH site. Position 123 (lysine 123) interacts with 1-deoxy-D-xylulose 5-phosphate. Residue glutamate 124 participates in NADPH binding. Residue aspartate 148 coordinates Mn(2+). Serine 149, glutamate 150, serine 174, and histidine 197 together coordinate 1-deoxy-D-xylulose 5-phosphate. Glutamate 150 is a Mn(2+) binding site. Glycine 203 contacts NADPH. 1-deoxy-D-xylulose 5-phosphate is bound by residues serine 210, asparagine 215, lysine 216, and glutamate 219. Position 219 (glutamate 219) interacts with Mn(2+).

The protein belongs to the DXR family. Mg(2+) serves as cofactor. Mn(2+) is required as a cofactor.

The enzyme catalyses 2-C-methyl-D-erythritol 4-phosphate + NADP(+) = 1-deoxy-D-xylulose 5-phosphate + NADPH + H(+). Its pathway is isoprenoid biosynthesis; isopentenyl diphosphate biosynthesis via DXP pathway; isopentenyl diphosphate from 1-deoxy-D-xylulose 5-phosphate: step 1/6. In terms of biological role, catalyzes the NADPH-dependent rearrangement and reduction of 1-deoxy-D-xylulose-5-phosphate (DXP) to 2-C-methyl-D-erythritol 4-phosphate (MEP). The polypeptide is 1-deoxy-D-xylulose 5-phosphate reductoisomerase (Leptospira borgpetersenii serovar Hardjo-bovis (strain JB197)).